A 292-amino-acid chain; its full sequence is uncharacterized protein (292 aa).

Positions 17, 55, 82, and 115 each coordinate NADP(+). The active-site Proton donor is S134. Residues Y148, K152, and T184 each contribute to the NADP(+) site. Catalysis depends on Y148, which acts as the Proton acceptor. K152 functions as the Lowers pKa of active site Tyr in the catalytic mechanism.

This sequence belongs to the short-chain dehydrogenases/reductases (SDR) family.

Its subcellular location is the cytoplasm. This is an uncharacterized protein from Schizosaccharomyces pombe (strain 972 / ATCC 24843) (Fission yeast).